A 499-amino-acid polypeptide reads, in one-letter code: Cytochrome P450 77A1 (499 aa).

Residue Cys443 participates in heme binding.

The protein belongs to the cytochrome P450 family. It depends on heme as a cofactor.

This chain is Cytochrome P450 77A1 (CYP77A1), found in Solanum melongena (Eggplant).